The sequence spans 356 residues: 3-isopropylmalate dehydrogenase (356 aa).

Substrate contacts are provided by Arg95, Arg105, Arg133, and Asp223. Residues Asp223, Asp247, and Asp251 each coordinate Mg(2+). An NAD(+)-binding site is contributed by 281-293; sequence GSAPDIAGQNKAN.

Belongs to the isocitrate and isopropylmalate dehydrogenases family. LeuB type 1 subfamily. In terms of assembly, homodimer. The cofactor is Mg(2+). Requires Mn(2+) as cofactor.

The protein localises to the cytoplasm. The catalysed reaction is (2R,3S)-3-isopropylmalate + NAD(+) = 4-methyl-2-oxopentanoate + CO2 + NADH. Its pathway is amino-acid biosynthesis; L-leucine biosynthesis; L-leucine from 3-methyl-2-oxobutanoate: step 3/4. Its function is as follows. Catalyzes the oxidation of 3-carboxy-2-hydroxy-4-methylpentanoate (3-isopropylmalate) to 3-carboxy-4-methyl-2-oxopentanoate. The product decarboxylates to 4-methyl-2 oxopentanoate. This Neisseria meningitidis serogroup B (strain ATCC BAA-335 / MC58) protein is 3-isopropylmalate dehydrogenase.